The primary structure comprises 180 residues: Putative adenylate kinase (180 aa).

5 residues coordinate ATP: G10, G12, K13, T14, and T15. Residues 30–50 (NLRDFALEKGIGEVKGDELEV) are NMP. Residues 99-109 (ERGYSKDKIGE) form an LID region. Residues R100 and K138 each contribute to the ATP site.

The protein belongs to the adenylate kinase family. AK6 subfamily. As to quaternary structure, interacts with uS11. Not a structural component of 40S pre-ribosomes, but transiently interacts with them by binding to uS11.

The catalysed reaction is AMP + ATP = 2 ADP. It catalyses the reaction ATP + H2O = ADP + phosphate + H(+). Broad-specificity nucleoside monophosphate (NMP) kinase that catalyzes the reversible transfer of the terminal phosphate group between nucleoside triphosphates and monophosphates. Also has ATPase activity. Involved in the late maturation steps of the 30S ribosomal particles, specifically 16S rRNA maturation. While NMP activity is not required for ribosome maturation, ATPase activity is. Associates transiently with small ribosomal subunit protein uS11. ATP hydrolysis breaks the interaction with uS11. May temporarily remove uS11 from the ribosome to enable a conformational change of the ribosomal RNA that is needed for the final maturation step of the small ribosomal subunit. This chain is Putative adenylate kinase, found in Pyrococcus furiosus (strain ATCC 43587 / DSM 3638 / JCM 8422 / Vc1).